Consider the following 561-residue polypeptide: Putative transport protein KPK_3686 (561 aa).

5 helical membrane passes run 8–28, 37–57, 66–86, 94–114, and 158–178; these read LLNG…LCLG, LGNS…HFAI, FMLF…SIFF, MLAL…GKVF, and HLSL…IVGA. RCK C-terminal domains lie at 202–288 and 292–373; these read LDTD…SFRN and VFDR…RIGF. The next 5 helical transmembrane spans lie at 383-403, 406-426, 447-467, 478-498, and 540-560; these read LLAF…TFQF, FSFG…LGFL, FGLM…INNG, AGLI…AYVL, and AIAN…WPGL.

This sequence belongs to the AAE transporter (TC 2.A.81) family. YbjL subfamily.

The protein localises to the cell membrane. The protein is Putative transport protein KPK_3686 of Klebsiella pneumoniae (strain 342).